Consider the following 518-residue polypeptide: Serine incorporator 4 (518 aa).

10 helical membrane-spanning segments follow: residues 59-79 (CSRLFYILLHVGASAICCLLL), 122-142 (VCAGTATFHLLQAVLLVHLHS), 153-173 (SFWLLKLLFLLGLCAIAFCIP), 184-204 (IGICGGFAFILLQLVLITAFA), 222-242 (FLAVLLATLGFYSMAGVGAVL), 259-279 (LLSLHLCFCGLISFLSIAPCI), 286-306 (SGLLQASVISCYIMYLTFSAL), 338-357 (ISLAMLSASIMYACVLFACN), 427-447 (AFHFVFFLASLYVMVTLTNWF), and 470-490 (VASCWACVLLYLGLLLAPLCW).

Belongs to the TDE1 family.

It localises to the membrane. Incorporates a polar amino acid serine into membranes and facilitates the synthesis of two serine-derived lipids, phosphatidylserine and sphingolipids. This is Serine incorporator 4 (SERINC4) from Homo sapiens (Human).